Here is a 385-residue protein sequence, read N- to C-terminus: Effector protein hopAB3 (385 aa).

3 disordered regions span residues 1 to 61 (MVGI…AGRP), 73 to 139 (TREW…SPLY), and 215 to 293 (ADSQ…PRIN). A host recognition region spans residues 1–333 (MVGISGRAGP…INMEDLRAAL (333 aa)). Residues 217–234 (SQQAARAPARTPPRSSVR) are compositionally biased toward low complexity. Polar residues-rich tracts occupy residues 245–256 (ATESSSGSNQRS) and 265–283 (MTSNQRRPSSASNASTSQR).

The protein belongs to the HopAB family. In terms of assembly, interacts physically with plant cell Pto.

It localises to the secreted. Its function is as follows. Effector protein involved in gene-for-gene resistance in tomato plants. It is recognized by the host Pto resistance protein and elicits Pto and Prf-dependent hypersensitive response (HR) and programmed cell death (PCD), resulting in host immunity. In susceptible plants, promotes virulence, in part, by enhancing the development of disease symptoms and bacterial growth. This Pseudomonas syringae pv. maculicola protein is Effector protein hopAB3 (hopAB3).